We begin with the raw amino-acid sequence, 148 residues long: uncharacterized protein (148 aa).

This is an uncharacterized protein from Acheta domesticus (House cricket).